Consider the following 102-residue polypeptide: Omega-hexatoxin-Hi2a (102 aa).

The N-terminal stretch at 1–23 (MKFSKLSLTLALILTQALLVVCG) is a signal peptide. Residues 24–56 (KINEDFMENGLESHALHDEIRKPIDTEKADAER) constitute a propeptide that is removed on maturation. Cystine bridges form between cysteine 61–cysteine 75, cysteine 68–cysteine 81, and cysteine 74–cysteine 86. Leucine 98 carries the post-translational modification Leucine amide. A propeptide spanning residues 100 to 102 (RAL) is cleaved from the precursor.

The protein belongs to the neurotoxin 15 family. 02 (omega-actx) subfamily. As to expression, expressed by the venom gland.

It is found in the secreted. Its function is as follows. Potent inhibitor of insect, but not mammalian, voltage-gated calcium channels (Cav). This Hadronyche infensa (Fraser island funnel-web spider) protein is Omega-hexatoxin-Hi2a.